The primary structure comprises 469 residues: Pancreatic lipase-related protein 2 (469 aa).

An N-terminal signal peptide occupies residues 1–17; it reads MLPSWTIGLLLLATVRG. C21 and C27 are disulfide-bonded. N-linked (GlcNAc...) asparagine glycosylation is present at N71. Residues 93–105 form a required for galactolipase activity region; the sequence is IHGFIDDGDSGWP. The cysteines at positions 109 and 120 are disulfide-linked. S171 functions as the Nucleophile in the catalytic mechanism. Catalysis depends on D195, which acts as the Charge relay system. E206, R209, D211, and D214 together coordinate Ca(2+). Cysteines 256 and 280 form a disulfide. Residues 257–279 form a required for galactolipase activity region; that stretch reads QKNILSTIIDINGIWQGIQDFVA. Residue H282 is the Charge relay system of the active site. Intrachain disulfides connect C304–C315 and C318–C323. Residues N353, N399, and N455 are each glycosylated (N-linked (GlcNAc...) asparagine). The PLAT domain occupies 357–469; that stretch reads WRYRVSVTLA…ENALQTLYPC (113 aa). C453 and C469 are joined by a disulfide.

The protein belongs to the AB hydrolase superfamily. Lipase family.

It is found in the secreted. Its subcellular location is the zymogen granule membrane. The protein resides in the cell projection. It localises to the neuron projection. It catalyses the reaction a triacylglycerol + H2O = a diacylglycerol + a fatty acid + H(+). The enzyme catalyses a 1,2-diacyl-3-O-(beta-D-galactosyl)-sn-glycerol + 2 H2O = 3-beta-D-galactosyl-sn-glycerol + 2 a fatty acid + 2 H(+). It carries out the reaction 1,2,3-tri-(9Z-octadecenoyl)-glycerol + H2O = di-(9Z)-octadecenoylglycerol + (9Z)-octadecenoate + H(+). The catalysed reaction is di-(9Z)-octadecenoylglycerol + H2O = (9Z-octadecenoyl)-glycerol + (9Z)-octadecenoate + H(+). It catalyses the reaction (9Z-octadecenoyl)-glycerol + H2O = glycerol + (9Z)-octadecenoate + H(+). The enzyme catalyses 1-(9Z-octadecenoyl)-glycerol + H2O = glycerol + (9Z)-octadecenoate + H(+). It carries out the reaction 1,2,3-tripropanoylglycerol + H2O = dipropanoylglycerol + propanoate + H(+). The catalysed reaction is 1,2,3-tributanoylglycerol + H2O = dibutanoylglycerol + butanoate + H(+). It catalyses the reaction 1,2,3-trioctanoylglycerol + H2O = dioctanoylglycerol + octanoate + H(+). The enzyme catalyses 1,2-didecanoylglycerol + H2O = decanoylglycerol + decanoate + H(+). It carries out the reaction long chain 1,2-diacyl-3-O-beta-D-galactosyl-sn-glycerol + H2O = long chain acyl-3-O-beta-D-galactosyl-sn-glycerol + a fatty acid + H(+). The catalysed reaction is 1,2-dioctanoyl-3-O-beta-D-galactosyl-sn-glycerol + H2O = octanoyl-3-(beta-D-galactosyl)-sn-glycerol + octanoate + H(+). It catalyses the reaction 1,2-didodecanoyl-3-beta-D-galactosyl-sn-glycerol + H2O = dodecanoyl-3-beta-D-galactosyl-sn-glycerol + dodecanoate + H(+). The enzyme catalyses 1-beta-D-galactosyl-2,3-didodecanoyl-sn-glycerol + H2O = 1-beta-D-galactosyl-dodecanoyl-sn-glycerol + dodecanoate + H(+). It carries out the reaction a 1,2-diacyl-3-O-[alpha-D-galactosyl-(1-&gt;6)-beta-D-galactosyl]-sn-glycerol + H2O = acyl-3-O-[alpha-D-galactosyl-(1-&gt;6)-beta-D-galactosyl]-sn-glycerol + a fatty acid + H(+). The catalysed reaction is long chain 1,2-diacyl-3-O-[alpha-D-galactosyl-(1-&gt;6)-beta-D-galactosyl]-sn-glycerol + H2O = long chain acyl-3-O-[alpha-D-galactosyl-(1-&gt;6)-beta-D-galactosyl]-sn-glycerol + a fatty acid + H(+). It catalyses the reaction 1,2-dioctanoyl-3-O-[alpha-D-galactosyl-(1-&gt;6)-beta-D-galactosyl]-sn-glycerol + H2O = octanoyl-3-O-[alpha-D-galactosyl-(1-&gt;6)-beta-D-galactosyl]-sn-glycerol + octanoate + H(+). The enzyme catalyses 1,2-didodecanoyl-3-O-[alpha-D-galactosyl-(1-&gt;6)-beta-D-galactosyl]-sn-glycerol + H2O = dodecanoyl-3-O-[alpha-D-galactosyl-(1-&gt;6)-beta-D-galactosyl]-sn-glycerol + dodecanoate + H(+). It carries out the reaction a 1,2-diacyl-sn-glycero-3-phosphocholine + H2O = a monoacyl-sn-glycero-3-phosphocholine + a fatty acid + H(+). It participates in glycerolipid metabolism; triacylglycerol degradation. Its pathway is glycolipid metabolism. Its function is as follows. Lipase that primarily hydrolyzes triglycerides and galactosylglycerides. In neonates, may play a major role in pancreatic digestion of dietary fats such as milk fat globules enriched in long-chain triglycerides. Hydrolyzes short-, medium- and long-chain fatty acyls in triglycerides without apparent positional specificity. Can completely deacylate triacylglycerols. When the liver matures and bile salt synthesis increases, likely functions mainly as a galactolipase and monoacylglycerol lipase. Hydrolyzes monogalactosyldiglycerols (MGDG) and digalactosyldiacylglycerols (DGDG) present in a plant-based diet, releasing long-chain polyunsaturated fatty acids. Hydrolyzes medium- and long-chain fatty acyls in galactolipids. May act together with LIPF to hydrolyze partially digested triglycerides. Hydrolyzes long-chain monoglycerides with high efficiency. In cytotoxic T cells, contributes to perforin-dependent cell lysis, but is unlikely to mediate direct cytotoxicity. Also has low phospholipase activity. In neurons, required for the localization of the phospholipid 1-oleoyl-2-palmitoyl-PC (OPPC) to neurite tips through acyl chain remodeling of membrane phospholipids. The resulting OPPC-rich lipid membrane domain recruits the t-SNARE protein STX4 by selectively interacting with the STX4 transmembrane domain and this promotes surface expression of the dopamine transporter SLC6A3/DAT at neurite tips by facilitating fusion of SLC6A3-containing transport vesicles with the plasma membrane. This chain is Pancreatic lipase-related protein 2, found in Bos taurus (Bovine).